The sequence spans 337 residues: Pyruvate dehydrogenase E1 component subunit beta (337 aa).

Glu-73 provides a ligand contact to thiamine diphosphate.

As to quaternary structure, heterodimer of an alpha and a beta chain. Requires thiamine diphosphate as cofactor.

The catalysed reaction is N(6)-[(R)-lipoyl]-L-lysyl-[protein] + pyruvate + H(+) = N(6)-[(R)-S(8)-acetyldihydrolipoyl]-L-lysyl-[protein] + CO2. Functionally, the pyruvate dehydrogenase complex catalyzes the overall conversion of pyruvate to acetyl-CoA and CO(2). It contains multiple copies of three enzymatic components: pyruvate dehydrogenase (E1), dihydrolipoamide acetyltransferase (E2) and lipoamide dehydrogenase (E3). This is Pyruvate dehydrogenase E1 component subunit beta (pdhB) from Leifsonia xyli subsp. xyli (strain CTCB07).